A 318-amino-acid polypeptide reads, in one-letter code: ATP synthase gamma chain (318 aa).

The protein belongs to the ATPase gamma chain family. F-type ATPases have 2 components, CF(1) - the catalytic core - and CF(0) - the membrane proton channel. CF(1) has five subunits: alpha(3), beta(3), gamma(1), delta(1), epsilon(1). CF(0) has three main subunits: a, b and c.

It is found in the cell membrane. Functionally, produces ATP from ADP in the presence of a proton gradient across the membrane. The gamma chain is believed to be important in regulating ATPase activity and the flow of protons through the CF(0) complex. This chain is ATP synthase gamma chain, found in Lactobacillus johnsonii (strain CNCM I-12250 / La1 / NCC 533).